We begin with the raw amino-acid sequence, 184 residues long: 3-hydroxydecanoyl-[acyl-carrier-protein] dehydratase (184 aa).

The active site involves His77.

It belongs to the thioester dehydratase family. FabA subfamily. Homodimer.

It is found in the cytoplasm. It carries out the reaction a (3R)-hydroxyacyl-[ACP] = a (2E)-enoyl-[ACP] + H2O. The catalysed reaction is (3R)-hydroxydecanoyl-[ACP] = (2E)-decenoyl-[ACP] + H2O. The enzyme catalyses (2E)-decenoyl-[ACP] = (3Z)-decenoyl-[ACP]. It participates in lipid metabolism; fatty acid biosynthesis. In terms of biological role, necessary for the introduction of cis unsaturation into fatty acids. Catalyzes the dehydration of (3R)-3-hydroxydecanoyl-ACP to E-(2)-decenoyl-ACP and then its isomerization to Z-(3)-decenoyl-ACP. Can catalyze the dehydratase reaction for beta-hydroxyacyl-ACPs with saturated chain lengths up to 16:0, being most active on intermediate chain length. This is 3-hydroxydecanoyl-[acyl-carrier-protein] dehydratase from Hyphomonas neptunium (strain ATCC 15444).